Reading from the N-terminus, the 131-residue chain is Cruxhalorhodopsin-1 (131 aa).

The chain crosses the membrane as a helical span at residues Pro-1–Ala-11. Topologically, residues Asp-12 to Asp-14 are cytoplasmic. Residues Ile-15 to Ile-38 form a helical membrane-spanning segment. Residues Thr-39–Ser-41 are Extracellular-facing. The chain crosses the membrane as a helical span at residues His-42–Leu-64. Topologically, residues Val-65–Thr-76 are cytoplasmic. A helical membrane pass occupies residues Ser-77 to Leu-100. Residues Gly-101–Ser-109 lie on the Extracellular side of the membrane. A helical membrane pass occupies residues Val-110–Ile-131. Position 125 is an N6-(retinylidene)lysine (Lys-125).

It belongs to the archaeal/bacterial/fungal opsin family.

Its subcellular location is the cell membrane. Functionally, light-driven chloride pump. The sequence is that of Cruxhalorhodopsin-1 (choP1) from Haloarcula argentinensis.